Reading from the N-terminus, the 568-residue chain is DNA mismatch repair protein MutL (568 aa).

The protein belongs to the DNA mismatch repair MutL/HexB family.

This protein is involved in the repair of mismatches in DNA. It is required for dam-dependent methyl-directed DNA mismatch repair. May act as a 'molecular matchmaker', a protein that promotes the formation of a stable complex between two or more DNA-binding proteins in an ATP-dependent manner without itself being part of a final effector complex. In Thermosipho africanus (strain TCF52B), this protein is DNA mismatch repair protein MutL.